The sequence spans 440 residues: Chitinase-like protein Idgf5 (440 aa).

An N-terminal signal peptide occupies residues 1–27; that stretch reads MRNKMIYFNFHLFVIIFANLQIFQVQA. In terms of domain architecture, GH18 spans 28–439; the sequence is ANIFCYYDTQ…KSIHNAFKKF (412 aa). A disulfide bond links Cys-32 and Cys-56. N-linked (GlcNAc...) asparagine glycans are attached at residues Asn-126, Asn-283, and Asn-403. A disulfide bridge connects residues Cys-340 and Cys-421.

It belongs to the glycosyl hydrolase 18 family. IDGF subfamily. In terms of processing, glycosylated.

The protein localises to the secreted. Its function is as follows. Cooperates with insulin-like peptides to stimulate the proliferation, polarization and motility of imaginal disk cells. May act by stabilizing the binding of insulin-like peptides to its receptor through a simultaneous interaction with both molecules to form a multiprotein signaling complex. The polypeptide is Chitinase-like protein Idgf5 (Idgf5) (Glossina morsitans morsitans (Savannah tsetse fly)).